Here is a 133-residue protein sequence, read N- to C-terminus: Putative biopolymer transport protein ExbD-like 1 (133 aa).

The Cytoplasmic segment spans residues 1–15 (MNYDNYWDEDKPELN). The helical transmembrane segment at 16–32 (ITPLVDVMLVLLAILMV) threads the bilayer. Residues 33–133 (TTPTLTYKEE…FLKVSLITSP (101 aa)) lie on the Periplasmic side of the membrane.

It belongs to the ExbD/TolR family.

It localises to the cell inner membrane. This Helicobacter pylori (strain J99 / ATCC 700824) (Campylobacter pylori J99) protein is Putative biopolymer transport protein ExbD-like 1.